A 455-amino-acid chain; its full sequence is DNA repair protein RadA (455 aa).

A C4-type zinc finger spans residues 12–29 (CSECGSYSPKWLGQCPGC). Residue 95-102 (GEPGIGKS) participates in ATP binding. Positions 252-256 (KNRFG) match the RadA KNRFG motif motif. Residues 351–455 (DVFLSIAGGL…TIKDAVRLLQ (105 aa)) are lon-protease-like.

Belongs to the RecA family. RadA subfamily.

Its function is as follows. DNA-dependent ATPase involved in processing of recombination intermediates, plays a role in repairing DNA breaks. Stimulates the branch migration of RecA-mediated strand transfer reactions, allowing the 3' invading strand to extend heteroduplex DNA faster. Binds ssDNA in the presence of ADP but not other nucleotides, has ATPase activity that is stimulated by ssDNA and various branched DNA structures, but inhibited by SSB. Does not have RecA's homology-searching function. In Chlamydia muridarum (strain MoPn / Nigg), this protein is DNA repair protein RadA.